The following is a 319-amino-acid chain: Mas-related G-protein coupled receptor member D (319 aa).

Topologically, residues 1-30 (MNYTPYSSPAPGLTISPTMDPVTWVYFSVT) are extracellular. A helical transmembrane segment spans residues 31–51 (FLAMATCVCGIVGNSMVIWLL). Topologically, residues 52–64 (SFHRVQRSPFCTY) are cytoplasmic. Residues 65–85 (VLNLAVADLLFLLCMASLLSL) form a helical membrane-spanning segment. Residues 86 to 92 (ETGPLLT) are Extracellular-facing. A helical transmembrane segment spans residues 93–113 (ASTSARVYEGMKRIKYFAYTA). Topologically, residues 114–144 (GLSLLTAISTQRCLSVLFPIWYKCHRPQHLS) are cytoplasmic. Residues 145-165 (GVVCGVLWALALLMNFLASFF) traverse the membrane as a helical segment. The Extracellular segment spans residues 166–184 (CVQFWHPDKYQCFKVDMVF). A helical membrane pass occupies residues 185–205 (NSLILGIFMPVMVLTSAIIFI). Over 206–220 (RMRKNSLLQRRQPRR) the chain is Cytoplasmic. The helical transmembrane segment at 221–241 (LYVVILTSVLVFLTCSLPLGI) threads the bilayer. The Extracellular segment spans residues 242–260 (NWFLLYWVELPQAVRLLYV). A helical membrane pass occupies residues 261–281 (CSSRFSSSLSSSANPVIYFLV). Residues 282–319 (GSQKSHRLQESLGAVLGRALQDEPEGRETPSTCTNDGV) are Cytoplasmic-facing.

It belongs to the G-protein coupled receptor 1 family. Mas subfamily. Co-expressed in the small diameter neurons with P2X3 and VR1 in dorsal root ganglia.

The protein resides in the cell membrane. Its function is as follows. May regulate nociceptor function and/or development, including the sensation or modulation of pain. Functions as a specific membrane receptor for beta-alanine. The receptor couples with G-protein G(q) and G(i). The protein is Mas-related G-protein coupled receptor member D (Mrgprd) of Rattus norvegicus (Rat).